The chain runs to 906 residues: Coatomer subunit beta' (906 aa).

WD repeat units follow at residues 13-52 (ARSD…LVKT), 55-94 (VCDL…RVHM), 97-136 (AHSD…SCSQ), 140-180 (GHTH…PNFT), 183-224 (GHEK…CVQT), 227-266 (GHAQ…LEST), 350-388 (SCEI…NKSF), and 390-425 (SAQE…KSFK). Lys-627 carries the N6-acetyllysine modification. The stretch at 746–783 (IRTGRLPEAAFLARTYLPSQVSRVVKLWRENLSKVNQK) is one WD 9 repeat. Residues 837–862 (EEAKGFQPSRSTAQQELDGKPASPTP) form a disordered region. Ser-859 is subject to Phosphoserine. The residue at position 861 (Thr-861) is a Phosphothreonine. Residues 866–890 (ASHTANKEEKSLLELEVDLDNLELE) adopt a coiled-coil conformation.

Belongs to the WD repeat COPB2 family. As to quaternary structure, oligomeric complex that consists of at least the alpha, beta, beta', gamma, delta, epsilon and zeta subunits. Probably interacts with PEX11A. Interacts with SCYL1. Interacts with JAGN1.

It localises to the cytoplasm. Its subcellular location is the cytosol. The protein resides in the golgi apparatus membrane. The protein localises to the cytoplasmic vesicle. It is found in the COPI-coated vesicle membrane. In terms of biological role, the coatomer is a cytosolic protein complex that binds to dilysine motifs and reversibly associates with Golgi non-clathrin-coated vesicles, which further mediate biosynthetic protein transport from the ER, via the Golgi up to the trans Golgi network. Coatomer complex is required for budding from Golgi membranes, and is essential for the retrograde Golgi-to-ER transport of dilysine-tagged proteins. In mammals, the coatomer can only be recruited by membranes associated to ADP-ribosylation factors (ARFs), which are small GTP-binding proteins; the complex also influences the Golgi structural integrity, as well as the processing, activity, and endocytic recycling of LDL receptors. Functionally, this coatomer complex protein, essential for Golgi budding and vesicular trafficking, is a selective binding protein (RACK) for protein kinase C, epsilon type. It binds to Golgi membranes in a GTP-dependent manner. This chain is Coatomer subunit beta' (COPB2), found in Macaca fascicularis (Crab-eating macaque).